Here is a 107-residue protein sequence, read N- to C-terminus: Pyrimidine/purine nucleoside phosphorylase (107 aa).

It belongs to the nucleoside phosphorylase PpnP family.

It catalyses the reaction a purine D-ribonucleoside + phosphate = a purine nucleobase + alpha-D-ribose 1-phosphate. It carries out the reaction adenosine + phosphate = alpha-D-ribose 1-phosphate + adenine. The catalysed reaction is cytidine + phosphate = cytosine + alpha-D-ribose 1-phosphate. The enzyme catalyses guanosine + phosphate = alpha-D-ribose 1-phosphate + guanine. It catalyses the reaction inosine + phosphate = alpha-D-ribose 1-phosphate + hypoxanthine. It carries out the reaction thymidine + phosphate = 2-deoxy-alpha-D-ribose 1-phosphate + thymine. The catalysed reaction is uridine + phosphate = alpha-D-ribose 1-phosphate + uracil. The enzyme catalyses xanthosine + phosphate = alpha-D-ribose 1-phosphate + xanthine. Catalyzes the phosphorolysis of diverse nucleosides, yielding D-ribose 1-phosphate and the respective free bases. Can use uridine, adenosine, guanosine, cytidine, thymidine, inosine and xanthosine as substrates. Also catalyzes the reverse reactions. The protein is Pyrimidine/purine nucleoside phosphorylase of Aromatoleum aromaticum (strain DSM 19018 / LMG 30748 / EbN1) (Azoarcus sp. (strain EbN1)).